Here is a 159-residue protein sequence, read N- to C-terminus: Protein Smg homolog (159 aa).

This sequence belongs to the Smg family.

The chain is Protein Smg homolog from Vibrio parahaemolyticus serotype O3:K6 (strain RIMD 2210633).